Consider the following 162-residue polypeptide: uncharacterized protein (162 aa).

An N-terminal signal peptide occupies residues 1 to 24; the sequence is MKRGVATLPVILVILLSVAAGAGA.

This is an uncharacterized protein from Mycobacterium bovis (strain ATCC BAA-935 / AF2122/97).